The sequence spans 290 residues: Cilia- and flagella-associated protein 298 (290 aa).

This sequence belongs to the CFAP298 family. In terms of assembly, interacts with ZMYND10.

The protein localises to the cytoplasm. The protein resides in the cytoskeleton. It is found in the cilium basal body. Its function is as follows. Plays a role in motile cilium function, possibly by acting on outer dynein arm assembly. Seems to be important for initiation rather than maintenance of cilium motility. Required for correct positioning of cilia at the apical cell surface, suggesting an additional role in the planar cell polarity (PCP) pathway. May suppress canonical Wnt signaling activity. This is Cilia- and flagella-associated protein 298 from Mus musculus (Mouse).